The primary structure comprises 319 residues: Protease HtpX homolog (319 aa).

The next 2 helical transmembrane spans lie at 6–26 and 28–48; these read TAMLLAFMTALFMAVGYVIGG and GGMMIALLMAAGMNFFSYWNS. His-130 provides a ligand contact to Zn(2+). The active site involves Glu-131. His-134 serves as a coordination point for Zn(2+). The next 2 helical transmembrane spans lie at 145-165 and 172-192; these read LTATLAGAISMLGNFAFFFGG and PLGFVGVLIAMIVAPFAAMLV. Residue Glu-201 coordinates Zn(2+). The tract at residues 279 to 319 is disordered; the sequence is REMSAGSTAPARPDNAVRRSRSVPKTGWGRGGSEPPKGPWS.

Belongs to the peptidase M48B family. Zn(2+) is required as a cofactor.

It localises to the cell inner membrane. The chain is Protease HtpX homolog from Sinorhizobium fredii (strain NBRC 101917 / NGR234).